A 105-amino-acid chain; its full sequence is MGPQQDRSAAKPYANGSTAAAAAAGRKENNKVVRYRECQRNHAASIGGHAVDGCREFMASGAEGTAAALLCAACGCHRSFHRREVEAAAAECDCSSDTSSGTGRR.

The tract at residues 1 to 29 (MGPQQDRSAAKPYANGSTAAAAAAGRKEN) is disordered. Residues 35 to 84 (YRECQRNHAASIGGHAVDGCREFMASGAEGTAAALLCAACGCHRSFHRRE) form a ZF-HD dimerization-type; degenerate zinc finger.

As to quaternary structure, homo- and heterodimers.

It localises to the cytoplasm. Functionally, inhibits zinc finger homeodomain (ZHD) transcription factors, by interacting with them to prevent both their nuclear localization and their DNA-binding properties. In Oryza sativa subsp. indica (Rice), this protein is Mini zinc finger protein 1 (MIF1).